The sequence spans 340 residues: 4-amino-5-hydroxymethyl-2-methylpyrimidine phosphate synthase THI5 (340 aa).

The residue at position 62 (Lys62) is an N6-(pyridoxal phosphate)lysine. The active site involves His66. 115-118 (GEFG) contributes to the pyridoxal 5'-phosphate binding site. The short motif at 195 to 199 (CCCFC) is the CCCFC; essential for catalytic activity, may be the site of iron coordination element.

It belongs to the NMT1/THI5 family. Homodimer. Fe cation is required as a cofactor.

The enzyme catalyses N(6)-(pyridoxal phosphate)-L-lysyl-[4-amino-5-hydroxymethyl-2-methylpyrimidine phosphate synthase] + L-histidyl-[4-amino-5-hydroxymethyl-2-methylpyrimidine phosphate synthase] + 2 Fe(3+) + 4 H2O = L-lysyl-[4-amino-5-hydroxymethyl-2-methylpyrimidine phosphate synthase] + (2S)-2-amino-5-hydroxy-4-oxopentanoyl-[4-amino-5-hydroxymethyl-2-methylpyrimidine phosphate synthase] + 4-amino-2-methyl-5-(phosphooxymethyl)pyrimidine + 3-oxopropanoate + 2 Fe(2+) + 2 H(+). It functions in the pathway cofactor biosynthesis; thiamine diphosphate biosynthesis. In terms of biological role, responsible for the formation of the pyrimidine heterocycle in the thiamine biosynthesis pathway. Catalyzes the formation of hydroxymethylpyrimidine phosphate (HMP-P) from histidine and pyridoxal phosphate (PLP). The protein uses PLP and the active site histidine to form HMP-P, generating an inactive enzyme. The enzyme can only undergo a single turnover, which suggests it is a suicide enzyme. This chain is 4-amino-5-hydroxymethyl-2-methylpyrimidine phosphate synthase THI5, found in Saccharomyces cerevisiae (strain ATCC 204508 / S288c) (Baker's yeast).